A 518-amino-acid chain; its full sequence is MTLAEFWPLCLRRLHDMLPHGQFAQWIAPLTVGEEGGVWVVYGKNQFACNMLKSQFAGKIEAVREELAAGRSAFVFKPGEGVCYEMAAVEGAVEPAEPSLHAGSEEMPVQEVLLDELPSEEPVKPAASKTAADILAERMRNLPHEPRQAAGSASRPESAAVAKARTDAQRDAEEARYEQTNLSPDYTFDTLVEGKGNRLAAAAAQAIAESPGQSYNPFFLYGSTGLGKTHLVQAVGNELLKNRPDAKVRYMHSDDYIRSFMKAVRNNTYDVFKQQYKQYDLLIIDDIQFIKGKDRTMEEFFYLYNHFHNEKKQLILTCDVLPAKIEGMDDRLKSRFSWGLTLELEPPELEMRIAILQKKAEAAGISIEDEAALFIANLIRSNVRELEGAFNRVGASSRFMNRPVIDIDLARTALQDIIAEKHKVITADIIIDAVAKYYRIKISDVLGKKRTRNIARPRQVAMSLTKELTTLSLPSIGDSFGGRDHTTVMHGIRAVAKLREEDPELAQDYEKLLILIQN.

The interval 1 to 72 (MTLAEFWPLC…VREELAAGRS (72 aa)) is domain I, interacts with DnaA modulators. The domain II stretch occupies residues 72–180 (SAFVFKPGEG…DAEEARYEQT (109 aa)). The interval 145–178 (EPRQAAGSASRPESAAVAKARTDAQRDAEEARYE) is disordered. The span at 164–177 (ARTDAQRDAEEARY) shows a compositional bias: basic and acidic residues. The interval 181 to 397 (NLSPDYTFDT…GAFNRVGASS (217 aa)) is domain III, AAA+ region. Glycine 225, glycine 227, lysine 228, and threonine 229 together coordinate ATP. Residues 398 to 518 (RFMNRPVIDI…YEKLLILIQN (121 aa)) form a domain IV, binds dsDNA region.

Belongs to the DnaA family. Oligomerizes as a right-handed, spiral filament on DNA at oriC.

Its subcellular location is the cytoplasm. Plays an essential role in the initiation and regulation of chromosomal replication. ATP-DnaA binds to the origin of replication (oriC) to initiate formation of the DNA replication initiation complex once per cell cycle. Binds the DnaA box (a 9 base pair repeat at the origin) and separates the double-stranded (ds)DNA. Forms a right-handed helical filament on oriC DNA; dsDNA binds to the exterior of the filament while single-stranded (ss)DNA is stabiized in the filament's interior. The ATP-DnaA-oriC complex binds and stabilizes one strand of the AT-rich DNA unwinding element (DUE), permitting loading of DNA polymerase. After initiation quickly degrades to an ADP-DnaA complex that is not apt for DNA replication. Binds acidic phospholipids. The sequence is that of Chromosomal replication initiator protein DnaA from Neisseria meningitidis serogroup A / serotype 4A (strain DSM 15465 / Z2491).